Consider the following 230-residue polypeptide: Putative N-acetylmannosamine-6-phosphate 2-epimerase (230 aa).

Belongs to the NanE family.

The catalysed reaction is an N-acyl-D-glucosamine 6-phosphate = an N-acyl-D-mannosamine 6-phosphate. Its pathway is amino-sugar metabolism; N-acetylneuraminate degradation; D-fructose 6-phosphate from N-acetylneuraminate: step 3/5. Its function is as follows. Converts N-acetylmannosamine-6-phosphate (ManNAc-6-P) to N-acetylglucosamine-6-phosphate (GlcNAc-6-P). This chain is Putative N-acetylmannosamine-6-phosphate 2-epimerase, found in Malacoplasma penetrans (strain HF-2) (Mycoplasma penetrans).